We begin with the raw amino-acid sequence, 129 residues long: Glycine cleavage system H protein (129 aa).

In terms of domain architecture, Lipoyl-binding spans 24–106 (LVRVGISAFA…HGEGWLLVLR (83 aa)). At Lys65 the chain carries N6-lipoyllysine.

Belongs to the GcvH family. The glycine cleavage system is composed of four proteins: P, T, L and H. It depends on (R)-lipoate as a cofactor.

Its function is as follows. The glycine cleavage system catalyzes the degradation of glycine. The H protein shuttles the methylamine group of glycine from the P protein to the T protein. The protein is Glycine cleavage system H protein of Synechococcus sp. (strain CC9605).